A 426-amino-acid chain; its full sequence is Cell cycle checkpoint control protein RAD9B (426 aa).

Serine 359 carries the post-translational modification Phosphoserine.

Belongs to the rad9 family. As to quaternary structure, interacts with HUS1, HUS1B, RAD1, RAD9A and RAD17. As to expression, expressed in testis and skeletal muscle.

This Homo sapiens (Human) protein is Cell cycle checkpoint control protein RAD9B (RAD9B).